The primary structure comprises 516 residues: MRDTSPFYITTAISYPNGKPHIGHAYELIATDAMARFQRLDGREVFFLTGTDEHGQKMQQTAKKEGISPQELAARNSAEFQNMARLLNASNDDFIRTTEQRHHEASQAIWMRMGEAGDLYKDSYAGWYSVRDEAYYQENETELRGDGVRYGPQGTPVEWVEEESYFFRLSAYQDKLLKHYEENPDFIGPAERRNEVISFVKSGLKDLSVSRTTFDWGIKVPNDPSHVMYVWVDALTNYVTATGCLTDPTGPRAKFWPANIHVIGKDIIRFHAVYWPAFLMSAGLPLPKRVFAHGFLLNKGEKMSKSLGNVVDPFNLVEHFGLDQIRYFFLREVSFGQDGSYSEEGIATRINSDLANGIGNLASRSLSMIVKNCDGQVPLCGPLTDEDKAMLAAADSLIGTAREEMGKQLIHRALAAIIAVVSETDRYFAGQEPWALKKTDPSRMATVLYVTAEVVRQVAILLQPFMPESAGKLLDLVAVPTDRRDFAHLGEAGRLVSGTPLEAPKPVFPRYVAPEA.

Residues 14 to 24 (SYPNGKPHIGH) carry the 'HIGH' region motif. The 'KMSKS' region signature appears at 302-306 (KMSKS). K305 is an ATP binding site.

It belongs to the class-I aminoacyl-tRNA synthetase family. MetG type 2B subfamily. In terms of assembly, monomer.

The protein localises to the cytoplasm. The catalysed reaction is tRNA(Met) + L-methionine + ATP = L-methionyl-tRNA(Met) + AMP + diphosphate. Functionally, is required not only for elongation of protein synthesis but also for the initiation of all mRNA translation through initiator tRNA(fMet) aminoacylation. This is Methionine--tRNA ligase from Rhizobium meliloti (strain 1021) (Ensifer meliloti).